The chain runs to 690 residues: Amino-acid acetyltransferase, mitochondrial (690 aa).

The disordered stretch occupies residues 62-93 (RFPSVKKPKPPIPRQNQGAVETQSGKENEKPG). A compositionally biased stretch (polar residues) spans 75 to 84 (RQNQGAVETQ). An N-acetyltransferase domain is found at 508–679 (DGHHLTLDDP…DYEAVCRSIQ (172 aa)).

It belongs to the acetyltransferase family.

The protein resides in the mitochondrion. It catalyses the reaction L-glutamate + acetyl-CoA = N-acetyl-L-glutamate + CoA + H(+). Its pathway is amino-acid biosynthesis; L-arginine biosynthesis; N(2)-acetyl-L-ornithine from L-glutamate: step 1/4. In terms of biological role, N-acetylglutamate synthase involved in arginine biosynthesis. This chain is Amino-acid acetyltransferase, mitochondrial (arg2), found in Talaromyces stipitatus (strain ATCC 10500 / CBS 375.48 / QM 6759 / NRRL 1006) (Penicillium stipitatum).